The following is a 354-amino-acid chain: Replication factor C subunit 5 (354 aa).

ATP contacts are provided by residues Val-5, Ser-17, 43 to 51 (GPNGTGKKT), and Arg-231.

The protein belongs to the activator 1 small subunits family. As to quaternary structure, replication factor C (RFC) is a heteropentamer of subunits RFC1, RFC2, RFC3, RFC4 and RFC5 and forms a complex with POL30/PCNA in the presence of ATP. Component of the RAD24-RFC complex which consists of RAD24, RFC2, RFC3, RFC4 and RFC5 and associates with the checkpoint clamp DDC1:MEC3:RAD17 complex. Component of the ELG1-RFC complex which consists of ELG1, RFC2, RFC3, RFC4 and RFC5. Component of the CTF18-RFC complex, which consists of CTF18, CTF8, DCC1, RFC2, RFC3, RFC4 and RFC5. RFC5 interacts with ECO1.

It localises to the nucleus. Its function is as follows. Component of ATP-dependent clamp loader (RFC and RFC-like) complexes for DNA clamps, such as the POL30/PCNA homotrimer and the checkpoint clamp DDC1:MEC3:RAD17 complex. During a clamp loading circle, the RFC:clamp complex binds to DNA and the recognition of the double-stranded/single-stranded junction stimulates ATP hydrolysis by RFC. The complex presumably provides bipartite ATP sites in which one subunit supplies a catalytic site for hydrolysis of ATP bound to the neighboring subunit. Dissociation of RFC from the clamp leaves the clamp encircling DNA. Component of the replication factor C (RFC or activator 1) complex which loads POL30/PCNA and acts during elongation of primed DNA templates by DNA polymerase delta and epsilon. RFC has an essential but redundant activity in sister chromatid cohesion establishment. Component of the RFC-like complex CTF18-RFC which is required for efficient establishment of chromosome cohesion during S-phase and may load or unload POL30/PCNA. Component of the RFC-like RAD24-RFC complex which loads the checkpoint clamp DDC1:MEC3:RAD17 complex and is involved in DNA repair pathways. Component of the RFC-like ELG1-RFC complex which appears to have a role in DNA replication, replication fork re-start, recombination and repair. This is Replication factor C subunit 5 (RFC5) from Saccharomyces cerevisiae (strain ATCC 204508 / S288c) (Baker's yeast).